The following is a 330-amino-acid chain: Ketol-acid reductoisomerase (NADP(+)) (330 aa).

The KARI N-terminal Rossmann domain maps to 2 to 182 (VKVYYDADAN…GCTKAGVFET (181 aa)). Residues 25–28 (YGSQ), Arg48, Ser51, and 83–86 (DEIQ) each bind NADP(+). The active site involves His108. An NADP(+)-binding site is contributed by Gly134. The 146-residue stretch at 183–328 (SFREETETDL…ARLREMMPWL (146 aa)) folds into the KARI C-terminal knotted domain. Mg(2+) is bound by residues Asp191, Glu195, Glu227, and Glu231. Residue Ser252 coordinates substrate.

The protein belongs to the ketol-acid reductoisomerase family. Mg(2+) is required as a cofactor.

The catalysed reaction is (2R)-2,3-dihydroxy-3-methylbutanoate + NADP(+) = (2S)-2-acetolactate + NADPH + H(+). The enzyme catalyses (2R,3R)-2,3-dihydroxy-3-methylpentanoate + NADP(+) = (S)-2-ethyl-2-hydroxy-3-oxobutanoate + NADPH + H(+). It participates in amino-acid biosynthesis; L-isoleucine biosynthesis; L-isoleucine from 2-oxobutanoate: step 2/4. The protein operates within amino-acid biosynthesis; L-valine biosynthesis; L-valine from pyruvate: step 2/4. Functionally, involved in the biosynthesis of branched-chain amino acids (BCAA). Catalyzes an alkyl-migration followed by a ketol-acid reduction of (S)-2-acetolactate (S2AL) to yield (R)-2,3-dihydroxy-isovalerate. In the isomerase reaction, S2AL is rearranged via a Mg-dependent methyl migration to produce 3-hydroxy-3-methyl-2-ketobutyrate (HMKB). In the reductase reaction, this 2-ketoacid undergoes a metal-dependent reduction by NADPH to yield (R)-2,3-dihydroxy-isovalerate. This Desulforamulus reducens (strain ATCC BAA-1160 / DSM 100696 / MI-1) (Desulfotomaculum reducens) protein is Ketol-acid reductoisomerase (NADP(+)).